A 1358-amino-acid polypeptide reads, in one-letter code: DNA-directed RNA polymerase subunit beta (1358 aa).

This sequence belongs to the RNA polymerase beta chain family. As to quaternary structure, the RNAP catalytic core consists of 2 alpha, 1 beta, 1 beta' and 1 omega subunit. When a sigma factor is associated with the core the holoenzyme is formed, which can initiate transcription.

The enzyme catalyses RNA(n) + a ribonucleoside 5'-triphosphate = RNA(n+1) + diphosphate. Its function is as follows. DNA-dependent RNA polymerase catalyzes the transcription of DNA into RNA using the four ribonucleoside triphosphates as substrates. The protein is DNA-directed RNA polymerase subunit beta of Francisella tularensis subsp. holarctica (strain OSU18).